Here is a 105-residue protein sequence, read N- to C-terminus: MASRIKKGDQVIVIAGKDKGKQGEIIRIDGHRVVVSNVNIVKRHTKPNPQRGISGGLIDREAPIHVSNIQILNPMTGKGDRVGFKILDDGCKLRIFRSTGEVIGA.

It belongs to the universal ribosomal protein uL24 family. In terms of assembly, part of the 50S ribosomal subunit.

One of two assembly initiator proteins, it binds directly to the 5'-end of the 23S rRNA, where it nucleates assembly of the 50S subunit. Functionally, one of the proteins that surrounds the polypeptide exit tunnel on the outside of the subunit. This chain is Large ribosomal subunit protein uL24, found in Xylella fastidiosa (strain M12).